A 117-amino-acid polypeptide reads, in one-letter code: Large ribosomal subunit protein bL20c (117 aa).

This sequence belongs to the bacterial ribosomal protein bL20 family.

The protein resides in the plastid. In terms of biological role, binds directly to 23S ribosomal RNA and is necessary for the in vitro assembly process of the 50S ribosomal subunit. It is not involved in the protein synthesizing functions of that subunit. This chain is Large ribosomal subunit protein bL20c (rpl20), found in Euglena longa (Euglenophycean alga).